The following is a 214-amino-acid chain: MRIILLGAPGAGKGTQAQFIMEKYGIPQISTGDMLRAAIKAGTELGKQAKAVIDAGQLVSDEIILGLIKERIAQEDCAKGFLLDGFPRTIPQADGLKEMGVAVDYVIEFDVADDVIVERMAGRRAHLPSGRTYHVVYNPPKVEGKDDVTGEDLVVRDDDKEETVRARLGVYHSQTAPLIEYYGKEAAESNTKYLKFDGTKQVAQVSADIEKALA.

Glycine 10–threonine 15 serves as a coordination point for ATP. Residues serine 30–valine 59 form an NMP region. Residues threonine 31, arginine 36, glutamine 57 to valine 59, glycine 85 to arginine 88, and glutamine 92 each bind AMP. An LID region spans residues glycine 122–aspartate 159. ATP contacts are provided by residues arginine 123 and threonine 132–tyrosine 133. The AMP site is built by arginine 156 and arginine 167. Lysine 200 contributes to the ATP binding site.

It belongs to the adenylate kinase family. In terms of assembly, monomer.

Its subcellular location is the cytoplasm. The enzyme catalyses AMP + ATP = 2 ADP. The protein operates within purine metabolism; AMP biosynthesis via salvage pathway; AMP from ADP: step 1/1. Functionally, catalyzes the reversible transfer of the terminal phosphate group between ATP and AMP. Plays an important role in cellular energy homeostasis and in adenine nucleotide metabolism. In Vibrio vulnificus (strain YJ016), this protein is Adenylate kinase.